The following is a 503-amino-acid chain: Putative FBD-associated F-box protein At5g56410 (503 aa).

One can recognise an F-box domain in the interval 2 to 50 (DKITGFSDDELLVKILSFLPTKAAVTTSILSKQWKFLWMRLPKLEYHDD). The 52-residue stretch at 361–412 (FWEQMITSVPQCLLSSLQTFKWLGNGDSIEGKDLATFILRNSCQLKTATISI) folds into the FBD domain.

This Arabidopsis thaliana (Mouse-ear cress) protein is Putative FBD-associated F-box protein At5g56410.